The following is a 415-amino-acid chain: Gamma-glutamyl phosphate reductase (415 aa).

This sequence belongs to the gamma-glutamyl phosphate reductase family.

Its subcellular location is the cytoplasm. It catalyses the reaction L-glutamate 5-semialdehyde + phosphate + NADP(+) = L-glutamyl 5-phosphate + NADPH + H(+). The protein operates within amino-acid biosynthesis; L-proline biosynthesis; L-glutamate 5-semialdehyde from L-glutamate: step 2/2. Its function is as follows. Catalyzes the NADPH-dependent reduction of L-glutamate 5-phosphate into L-glutamate 5-semialdehyde and phosphate. The product spontaneously undergoes cyclization to form 1-pyrroline-5-carboxylate. This Desulforamulus reducens (strain ATCC BAA-1160 / DSM 100696 / MI-1) (Desulfotomaculum reducens) protein is Gamma-glutamyl phosphate reductase.